A 184-amino-acid chain; its full sequence is Tumor necrosis factor alpha-induced protein 8-like protein 2 (184 aa).

A Phosphoserine modification is found at Ser-3.

It belongs to the TNFAIP8 family. TNFAIP8L2 subfamily. May interact with CASP8; however, such result is unclear since could not reproduce the interaction with CASP8. Interacts with RAC1. Phosphorylated by TAK1/MAP3K7; this phosphorylation triggers association with BTRC and subsequent ubiquitination and degradation. In terms of processing, ubiquitinated in a BTRC-depdent manner; leading to degradation mediated through the proteasome pathway. Expressed in thymus, spleen, lymph node and small intestine, but not in liver, heart, muscle, testis, spinal cord or brain. Up-regulated in the spinal cord of mice with experimental autoimmune encephalomyelitis. Constitutively expressed by macrophages, B and T-lymphocytes at various developmental stages.

It is found in the cytoplasm. Its subcellular location is the nucleus. It localises to the lysosome. Functionally, acts as a negative regulator of innate and adaptive immunity by maintaining immune homeostasis. Plays a regulatory role in the Toll-like signaling pathway by determining the strength of LPS-induced signaling and gene expression. Inhibits TCR-mediated T-cell activation and negatively regulate T-cell function to prevent hyperresponsiveness. Also inhibits autolysosome formation via negatively modulating MTOR activation by interacting with RAC1 and promoting the disassociation of the RAC1-MTOR complex. Plays an essential role in NK-cell biology by acting as a checkpoint and displaying an expression pattern correlating with NK-cell maturation process and by negatively regulating NK-cell maturation and antitumor immunity. Mechanistically, suppresses IL-15-triggered mTOR activity in NK-cells. In Mus musculus (Mouse), this protein is Tumor necrosis factor alpha-induced protein 8-like protein 2 (Tnfaip8l2).